Consider the following 647-residue polypeptide: DNA topoisomerase 4 subunit B (647 aa).

Residues Tyr-11, Asn-51, Asp-78, 118–124 (GLHGVGS), and Lys-344 contribute to the ATP site. A compositionally biased stretch (basic and acidic residues) spans 391–401 (AARKARDESRN). The segment at 391 to 421 (AARKARDESRNGKKNKKDKGLLSGKLTPAQS) is disordered. A Toprim domain is found at 427-541 (NELYLVEGDS…AGHVYIALPP (115 aa)). Residues Glu-433, Asp-506, and Asp-508 each contribute to the Mg(2+) site.

Belongs to the type II topoisomerase family. ParE type 2 subfamily. As to quaternary structure, heterotetramer composed of ParC and ParE. Mg(2+) is required as a cofactor. Requires Mn(2+) as cofactor. Ca(2+) serves as cofactor.

The enzyme catalyses ATP-dependent breakage, passage and rejoining of double-stranded DNA.. With respect to regulation, inhibited by quinolones, such as levofloxacin. Its function is as follows. Topoisomerase IV is essential for chromosome segregation. It relaxes supercoiled DNA. Performs the decatenation events required during the replication of a circular DNA molecule. This Streptococcus pneumoniae serotype 4 (strain ATCC BAA-334 / TIGR4) protein is DNA topoisomerase 4 subunit B.